Reading from the N-terminus, the 311-residue chain is Olfactory receptor 10G9 (311 aa).

The Extracellular portion of the chain corresponds to 1–23 (MSKTSLVTAFILTGLPHAPGLDA). Residues 24–44 (PLFGIFLVVYVLTVLGNLLIL) traverse the membrane as a helical segment. Topologically, residues 45–52 (LVIRVDSH) are cytoplasmic. A helical membrane pass occupies residues 53–73 (LHTPMYYFLTNLSFIDMWFST). Topologically, residues 74-98 (VTVPKMLMTLVSPSGRAISFHSCVA) are extracellular. Cys-96 and Cys-188 are joined by a disulfide. A helical transmembrane segment spans residues 99 to 119 (QLYFFHFLGSTECFLYTVMSY). The Cytoplasmic portion of the chain corresponds to 120–138 (DRYLAISYPLRYTSMMSGS). The helical transmembrane segment at 139-159 (RCALLATSTWLSGSLHSAVQT) threads the bilayer. At 160–196 (ILTFHLPYCGPNQIQHYLCDAPPILKLACADTSANEM) the chain is on the extracellular side. Residues 197 to 216 (VIFVDIGLVASGCFLLIVLS) traverse the membrane as a helical segment. The Cytoplasmic portion of the chain corresponds to 217–236 (YVSIVCSILRIHTSEGRHRA). A helical transmembrane segment spans residues 237 to 257 (FQTCASHCIVVLCFFVPCVFI). The Extracellular portion of the chain corresponds to 258 to 268 (YLRPGSRDVVD). Residues 269–289 (GVVAIFYTVLTPLLNPVVYTL) traverse the membrane as a helical segment. Residues 290–311 (RNKEVKKAVLKLRDKVAHSQGE) lie on the Cytoplasmic side of the membrane.

It belongs to the G-protein coupled receptor 1 family.

It is found in the cell membrane. Functionally, odorant receptor. The chain is Olfactory receptor 10G9 (OR10G9) from Homo sapiens (Human).